A 365-amino-acid chain; its full sequence is Aminomethyltransferase (365 aa).

The protein belongs to the GcvT family. In terms of assembly, the glycine cleavage system is composed of four proteins: P, T, L and H.

The enzyme catalyses N(6)-[(R)-S(8)-aminomethyldihydrolipoyl]-L-lysyl-[protein] + (6S)-5,6,7,8-tetrahydrofolate = N(6)-[(R)-dihydrolipoyl]-L-lysyl-[protein] + (6R)-5,10-methylene-5,6,7,8-tetrahydrofolate + NH4(+). The glycine cleavage system catalyzes the degradation of glycine. This is Aminomethyltransferase from Chlorobium phaeovibrioides (strain DSM 265 / 1930) (Prosthecochloris vibrioformis (strain DSM 265)).